We begin with the raw amino-acid sequence, 389 residues long: Pyruvate dehydrogenase E1 component subunit alpha, somatic form, mitochondrial (389 aa).

Residues 1 to 28 (GKMLAAVSRVLSGVAQKPASRVLVASRT) constitute a mitochondrion transit peptide. Lys-62 bears the N6-acetyllysine; alternate mark. Lys-62 is modified (N6-succinyllysine; alternate). His-91, Tyr-117, Arg-118, Ala-156, Gly-164, Val-166, Asp-195, Gly-196, Ala-197, Asn-224, and Tyr-226 together coordinate pyruvate. Residues Tyr-117 and Arg-118 each coordinate thiamine diphosphate. Gly-164, Val-166, Asp-195, Gly-196, Ala-197, and Asn-224 together coordinate thiamine diphosphate. Residue Asp-195 coordinates Mg(2+). 2 residues coordinate Mg(2+): Asn-224 and Tyr-226. Ser-231 carries the post-translational modification Phosphoserine; by PDK1. N6-acetyllysine; alternate is present on Lys-243. N6-succinyllysine; alternate is present on Lys-243. Lys-276 carries the post-translational modification N6-succinyllysine. His-291 provides a ligand contact to thiamine diphosphate. Phosphoserine; by PDK1, PDK2, PDK3 and PDK4 is present on Ser-292. A Phosphoserine modification is found at Ser-294. Ser-299 is subject to Phosphoserine; by PDK1, PDK2, PDK3 and PDK4. Residue Tyr-300 is modified to Phosphotyrosine. Lys-312 bears the N6-acetyllysine; alternate mark. N6-succinyllysine; alternate is present on Lys-312. Lys-320 and Lys-335 each carry N6-acetyllysine. Lys-384 is modified (N6-succinyllysine).

As to quaternary structure, heterotetramer of two PDHA1 and two PDHB subunits. The heterotetramer interacts with DLAT, and is part of the multimeric pyruvate dehydrogenase complex that contains multiple copies of pyruvate dehydrogenase (E1), dihydrolipoamide acetyltransferase (DLAT, E2) and lipoamide dehydrogenase (DLD, E3). These subunits are bound to an inner core composed of about 48 DLAT and 12 PDHX molecules. The cofactor is thiamine diphosphate. Mg(2+) serves as cofactor. Phosphorylation at Ser-231, Ser-292 and Ser-299 by PDK family kinases inactivates the enzyme; for this phosphorylation at a single site is sufficient. Phosphorylation at Ser-292 interferes with access to active site, and thereby inactivates the enzyme. Dephosphorylation at all three sites, i.e. at Ser-231, Ser-292 and Ser-299, is required for reactivation. Post-translationally, acetylation alters the phosphorylation pattern. Deacetylated by SIRT3.

It localises to the mitochondrion matrix. The enzyme catalyses N(6)-[(R)-lipoyl]-L-lysyl-[protein] + pyruvate + H(+) = N(6)-[(R)-S(8)-acetyldihydrolipoyl]-L-lysyl-[protein] + CO2. With respect to regulation, pyruvate dehydrogenase activity is inhibited by phosphorylation of PDHA1; it is reactivated by dephosphorylation. In terms of biological role, the pyruvate dehydrogenase complex catalyzes the overall conversion of pyruvate to acetyl-CoA and CO(2), and thereby links the glycolytic pathway to the tricarboxylic cycle. The chain is Pyruvate dehydrogenase E1 component subunit alpha, somatic form, mitochondrial (PDHA1) from Sus scrofa (Pig).